Here is an 851-residue protein sequence, read N- to C-terminus: Phosphatidylinositol 4-kinase pik1 (851 aa).

Residues 1-123 (MPSSNSGNEL…KICKRLYNRI (123 aa)) form the PIK helical domain. Phosphoserine is present on residues S202, S219, S222, and S235. Y236 carries the phosphotyrosine modification. Positions 384–404 (LQDSTDNDISESESEGGDLSM) are disordered. Acidic residues predominate over residues 388–399 (TDNDISESESEG). Positions 558–836 (YAKKERIRKS…LIQKANCSVW (279 aa)) constitute a PI3K/PI4K catalytic domain. The G-loop stretch occupies residues 564–570 (IRKSSPY). The interval 706 to 714 (QLKDRHNGN) is catalytic loop. The tract at residues 725–749 (HIDFGFLLTNTPGNVGFESAPFKLT) is activation loop.

The protein belongs to the PI3/PI4-kinase family. In terms of assembly, interacts with cdc4 and cam2.

It localises to the golgi apparatus. Its subcellular location is the nucleus. The catalysed reaction is a 1,2-diacyl-sn-glycero-3-phospho-(1D-myo-inositol) + ATP = a 1,2-diacyl-sn-glycero-3-phospho-(1D-myo-inositol 4-phosphate) + ADP + H(+). Its function is as follows. Acts on phosphatidylinositol (PI) in the first committed step in the production of the second messenger inositol 1,4,5,-trisphosphate. PIK1 is part of a nuclear phosphoinositide cycle and could control cytokinesis through the actin cytoskeleton. The protein is Phosphatidylinositol 4-kinase pik1 (pik1) of Schizosaccharomyces pombe (strain 972 / ATCC 24843) (Fission yeast).